The following is a 121-amino-acid chain: Large ribosomal subunit protein uL18 (121 aa).

This sequence belongs to the universal ribosomal protein uL18 family. In terms of assembly, part of the 50S ribosomal subunit; part of the 5S rRNA/L5/L18/L25 subcomplex. Contacts the 5S and 23S rRNAs.

This is one of the proteins that bind and probably mediate the attachment of the 5S RNA into the large ribosomal subunit, where it forms part of the central protuberance. The polypeptide is Large ribosomal subunit protein uL18 (Caldanaerobacter subterraneus subsp. tengcongensis (strain DSM 15242 / JCM 11007 / NBRC 100824 / MB4) (Thermoanaerobacter tengcongensis)).